Here is a 469-residue protein sequence, read N- to C-terminus: 3-isopropylmalate dehydratase large subunit (469 aa).

Cys-347, Cys-407, and Cys-410 together coordinate [4Fe-4S] cluster.

It belongs to the aconitase/IPM isomerase family. LeuC type 1 subfamily. Heterodimer of LeuC and LeuD. [4Fe-4S] cluster is required as a cofactor.

The enzyme catalyses (2R,3S)-3-isopropylmalate = (2S)-2-isopropylmalate. Its pathway is amino-acid biosynthesis; L-leucine biosynthesis; L-leucine from 3-methyl-2-oxobutanoate: step 2/4. Its function is as follows. Catalyzes the isomerization between 2-isopropylmalate and 3-isopropylmalate, via the formation of 2-isopropylmaleate. This Prochlorococcus marinus subsp. pastoris (strain CCMP1986 / NIES-2087 / MED4) protein is 3-isopropylmalate dehydratase large subunit.